The chain runs to 603 residues: MASEYLEHKLALLPDQPGCYLMKNANAQIIYVGKAKNLKNRVRSYFKSSHTGKVAAMVEEVADFETIVTSSNKESFLLEITLIQKHQPYYNIKLKRGTGYPYIKITNERDPIIKITGQVKKDGAYYFGPYPNVYAAEETVHFIQKVFPLRRCHGYQGRPCLYYHLGQCLGCCFKEVPEEEYAVQTKRIKSFLNGNTAQVKKQLTARMERAAGQLEFERAAEIRDQLHYIEVTVEKQKIISNDKTPRDLFNFYLDKGWLSIQVFFIRQARLMKREKRLFPVVDTAEEEMTSFILQFYNRRNKLLPKEILLPEGLPNQEIEEILGVPVRTPQRGEKRDLLDMAKENAILSLNEKFRLLEMDRQKTTGAMKEITDELGLPTGHVIEAFDHSHIQGADPVSAMVVFVNGEPAKKLYRKYKLTTVVDHADEAASTREVIFRRYSRLLKEEKPMPDMIMMDGGPIQMEAAKDVLENQLGLNIPVIGMVKNDKHQTADLLYGDDAHHVNLDPRSQGFYLVQRIQDEVHRFAITYHRKVHTKHSLSSRLDEIHGVGPRTRNKLLKAFGSINKIAVAPVEEIRALGINQTTAQLIKVSLQGQAEVKKGSSHD.

The region spanning 15–92 (DQPGCYLMKN…IQKHQPYYNI (78 aa)) is the GIY-YIG domain. The 36-residue stretch at 197–232 (AQVKKQLTARMERAAGQLEFERAAEIRDQLHYIEVT) folds into the UVR domain.

The protein belongs to the UvrC family. Interacts with UvrB in an incision complex.

Its subcellular location is the cytoplasm. Functionally, the UvrABC repair system catalyzes the recognition and processing of DNA lesions. UvrC both incises the 5' and 3' sides of the lesion. The N-terminal half is responsible for the 3' incision and the C-terminal half is responsible for the 5' incision. This Limosilactobacillus fermentum (strain NBRC 3956 / LMG 18251) (Lactobacillus fermentum) protein is UvrABC system protein C.